A 593-amino-acid polypeptide reads, in one-letter code: MVRDLVTLPSSLPLITAGFATDQVHLLIGTGSTDSVSVCKNRIHSILNAGGNPIVVNPSSPSHTKQLQLEFGKFAKFEIVEREFRLSDLTTLGRVLVCKVVDRVFVDLPITQSRLCEEIFWQCQKLRIPINTFHKPEFSTFNMIPTWVDPKGSGLQISVTTNGNGYILANRIKRDIISHLPPNISEVVINMGYLKDRIINEDHKALLEEKYYQTDMSLPGFGYGLDEDGWESHKFNKLIREFEMTSREQRLKRTRWLSQIMEYYPMNKLSDIKLEDFETSSSPNKKTKQETVTEGVVPPTDENIENGTKQLQLSEVKKEEGPKKLGKISLVGSGPGSVSMLTIGALQEIKSADIILADKLVPQAILDLIPPKTETFIAKKFPGNAERAQQELLAKGLESLDNGLKVVRLKQGDPYIFGRGGEEFNFFKDHGYIPVVLPGISSSLACTVLAQIPATQRDIADQVLICTGTGRKGALPIIPEFVESRTTVFLMALHRANVLITGLLKHGWDGDVPAAIVERGSCPDQRVTRTLLKWVPEVVEEIGSRPPGVLVVGKAVNALVEKDLINFDESRKFVIDEGFREFEVDVDSLFKLY.

The disordered stretch occupies residues 278–303; the sequence is ETSSSPNKKTKQETVTEGVVPPTDEN.

This sequence belongs to the precorrin methyltransferase family.

The enzyme catalyses uroporphyrinogen III + 2 S-adenosyl-L-methionine = precorrin-2 + 2 S-adenosyl-L-homocysteine + H(+). Functionally, siroheme synthase involved in methionine biosynthesis. The polypeptide is Uroporphyrinogen-III C-methyltransferase (Saccharomyces cerevisiae (strain ATCC 204508 / S288c) (Baker's yeast)).